We begin with the raw amino-acid sequence, 348 residues long: Ferredoxin--NADP reductase 1 (348 aa).

FAD is bound by residues Asp33, Lys41, Tyr45, Val85, Leu120, Asp287, and Ser328.

Belongs to the ferredoxin--NADP reductase type 2 family. As to quaternary structure, homodimer. FAD is required as a cofactor.

It catalyses the reaction 2 reduced [2Fe-2S]-[ferredoxin] + NADP(+) + H(+) = 2 oxidized [2Fe-2S]-[ferredoxin] + NADPH. This is Ferredoxin--NADP reductase 1 from Oceanobacillus iheyensis (strain DSM 14371 / CIP 107618 / JCM 11309 / KCTC 3954 / HTE831).